Consider the following 419-residue polypeptide: Inositol-tetrakisphosphate 1-kinase (419 aa).

K18 lines the 1D-myo-inositol 1,3,4-trisphosphate pocket. Positions 106 and 157 each coordinate ATP. An ATP-grasp domain is found at 117–334; that stretch reads EAYMKDDRIC…TGGAATEEVA (218 aa). 2 residues coordinate 1D-myo-inositol 1,3,4-trisphosphate: H167 and K199. Residues 188–199, S214, S232, and S236 contribute to the ATP site; that span reads QNFINHNAVLYK. Mg(2+)-binding residues include D281, D295, and N297. Residue N297 participates in 1D-myo-inositol 1,3,4-trisphosphate binding. An N6-acetyllysine; by EP300 and CREBBP modification is found at K388. The residue at position 401 (S401) is a Phosphoserine. The residue at position 415 (K415) is an N6-acetyllysine; by EP300 and CREBBP.

The protein belongs to the ITPK1 family. In terms of assembly, monomer. Interacts with GPS1/COPS1. The cofactor is Mg(2+). Acetylation by EP300 and CREBBP destabilizes ITPK1, and down-regulates enzymatic activity. Deacetylated by SIRT1.

It catalyses the reaction 1D-myo-inositol 3,4,5,6-tetrakisphosphate + ATP = 1D-myo-inositol 1,3,4,5,6-pentakisphosphate + ADP + H(+). The enzyme catalyses 1D-myo-inositol 1,3,4-trisphosphate + ATP = 1D-myo-inositol 1,3,4,5-tetrakisphosphate + ADP + H(+). It carries out the reaction 1D-myo-inositol 1,3,4-trisphosphate + ATP = 1D-myo-inositol 1,3,4,6-tetrakisphosphate + ADP + H(+). The catalysed reaction is 1D-myo-inositol 3,4,6-trisphosphate + ATP = 1D-myo-inositol 1,3,4,6-tetrakisphosphate + ADP + H(+). It catalyses the reaction 1D-myo-inositol 1,3,4-trisphosphate + 1D-myo-inositol 1,3,4,5,6-pentakisphosphate = 1D-myo-inositol 3,4,5,6-tetrakisphosphate + 1D-myo-inositol 1,3,4,6-tetrakisphosphate. The enzyme catalyses 1D-myo-inositol 1,3,4-trisphosphate + 1D-myo-inositol 1,3,4,5,6-pentakisphosphate = 1D-myo-inositol 3,4,5,6-tetrakisphosphate + 1D-myo-inositol 1,3,4,5-tetrakisphosphate. In terms of biological role, kinase that can phosphorylate various inositol polyphosphate such as Ins(3,4,5,6)P4 or Ins(1,3,4)P3. Phosphorylates Ins(3,4,5,6)P4 at position 1 to form Ins(1,3,4,5,6)P5. This reaction is thought to have regulatory importance, since Ins(3,4,5,6)P4 is an inhibitor of plasma membrane Ca(2+)-activated Cl(-) channels, while Ins(1,3,4,5,6)P5 is not. Also phosphorylates Ins(1,3,4)P3 on O-5 and O-6 to form Ins(1,3,4,6)P4, an essential molecule in the hexakisphosphate (InsP6) pathway. Also acts as an inositol polyphosphate phosphatase that dephosphorylates Ins(1,3,4,5)P4 and Ins(1,3,4,6)P4 to Ins(1,3,4)P3, and Ins(1,3,4,5,6)P5 to Ins(3,4,5,6)P4. May also act as an isomerase that interconverts the inositol tetrakisphosphate isomers Ins(1,3,4,5)P4 and Ins(1,3,4,6)P4 in the presence of ADP and magnesium. Probably acts as the rate-limiting enzyme of the InsP6 pathway. Modifies TNF-alpha-induced apoptosis by interfering with the activation of TNFRSF1A-associated death domain. Plays an important role in MLKL-mediated necroptosis. Produces highly phosphorylated inositol phosphates such as inositolhexakisphosphate (InsP6) which bind to MLKL mediating the release of an N-terminal auto-inhibitory region leading to its activation. Essential for activated phospho-MLKL to oligomerize and localize to the cell membrane during necroptosis. This chain is Inositol-tetrakisphosphate 1-kinase, found in Mus musculus (Mouse).